Reading from the N-terminus, the 309-residue chain is MTATNHPKLFKRPVDGVLLLDKPGGMTSNEALQRVKRLFHAKKAGHTGSLDPLATGLLPICLGEATKFSQFLLGADKSYSVKGRLGVRTASGDSESPILTERPIPKLTKRALEKTLSAFRGVIDQTPSMYSALKHKGQPLYKLARQGIEVERKTRQVTIYELTLLDWDNESIELYVHCSKGTYIRTLLDDVGEALGCGAHVVALRRLRVAHYHEDQMIKLAHLEREYDKANYTGLDRYLLPLETMVSHFPAIKLSSSTAFYLQQGQAVMVPNAPTHGFVRLRDQNDQFIGIGEILSDARIAPRRLIQKR.

Residue D51 is the Nucleophile of the active site.

Belongs to the pseudouridine synthase TruB family. Type 1 subfamily.

The catalysed reaction is uridine(55) in tRNA = pseudouridine(55) in tRNA. In terms of biological role, responsible for synthesis of pseudouridine from uracil-55 in the psi GC loop of transfer RNAs. The chain is tRNA pseudouridine synthase B from Coxiella burnetii (strain Dugway 5J108-111).